The following is a 994-amino-acid chain: MENAHAKTAEECLAFFGVNESVGLSGEQVRRALEKYGHNELPAEEGKTIWELVVEQFEDLLVRILLLAACISFVLAWFEEGEETITAFVEPFVILLILIANAVVGVWQERNAENAIEALKEYEPEMGKVYRADRKAVQRIKARDLVPGDIAEVAVGDKVPADIRIISIKSTTLRVDQSILTGESVSVIKHTEPVPDPRAVNQDKKNMLFSGTNIGAGKAVGIVVATGVNTEIGKIRDEMAATEQDKTPLQQKLDEFGEQLSKVISLICVAVWLINIGHFNDPVHGGSWIRGAIYYFKIAVALAVAAIPEGLPAVITTCLALGTRRMAKKNAIVRSLPSVETLGCTSVICSDKTGTLTTNQMSVCKMFIVDKVEGDVCSLNEFSITGSTYAPEGDVLKNEKHIKAGQHDGLVELATICALCNDSSLDYNEAKGIYEKVGEATETALTCLVEKMNVFNTDVRSLSKVERANACNSVIKQLMKKEFTLEFSRDRKSMSVYCSPAKASRAAVGNKMFVKGAPEGVIDRCNYVRVGTTRVPLTPAVKEKILAVIKEWGTGRDTLRCLALATRDTPPKMEDMMLVDSTKFAEYETDLTFVGCVGMLDPPRKEVMGSIRLCRDAGIRVIMITGDNKGTAIAICRRIGIFTEDEEVSGRAYTGREFDDLPPAEQREACRRACCFARVEPTHKSKIVEFLQSFDEITAMTGDGVNDAPALKKAEIGIAMGSGTAVAKTASEMVLADDNFSTIVAAVEEGRAIYNNMKQFIRYLISSNVGEVVCIFLTAALGLPEALIPVQLLWVNLVTDGLPATALGFNPPDLDIMDKPPRSPKEPLISGWLFFRYLAIGGYVGAATVGAAAWWFLYAEDGPSLTYHQLTHFMQCTHHNAEFEGVDCDIFESPVPMTMALSVLVTIEMCNALNSLSENQSLLRMPPWVNIWLVGSICLSMSLHFVILYVDPLPMIFKLTHLDLAHWLVVLRISFPVILLDEALKFVARNYLEA.

At 1-48 (MENAHAKTAEECLAFFGVNESVGLSGEQVRRALEKYGHNELPAEEGKT) the chain is on the cytoplasmic side. A helical transmembrane segment spans residues 49-69 (IWELVVEQFEDLLVRILLLAA). At 70 to 89 (CISFVLAWFEEGEETITAFV) the chain is on the lumenal side. Residues 90-110 (EPFVILLILIANAVVGVWQER) traverse the membrane as a helical segment. At 111-253 (NAENAIEALK…QDKTPLQQKL (143 aa)) the chain is on the cytoplasmic side. The helical transmembrane segment at 254–273 (DEFGEQLSKVISLICVAVWL) threads the bilayer. Residues 274–295 (INIGHFNDPVHGGSWIRGAIYY) are Lumenal-facing. A helical membrane pass occupies residues 296 to 313 (FKIAVALAVAAIPEGLPA). The Ca(2+) site is built by valine 304, alanine 305, isoleucine 307, and glutamate 309. The Cytoplasmic segment spans residues 314 to 757 (VITTCLALGT…EEGRAIYNNM (444 aa)). Aspartate 351 (4-aspartylphosphate intermediate) is an active-site residue. Residues aspartate 351 and threonine 353 each contribute to the Mg(2+) site. Residues threonine 353, glutamate 442, arginine 489, lysine 515, arginine 560, threonine 625, glycine 626, aspartate 627, arginine 678, and lysine 684 each contribute to the ATP site. Aspartate 703 is a Mg(2+) binding site. Position 706 (asparagine 706) interacts with ATP. The chain crosses the membrane as a helical span at residues 758–777 (KQFIRYLISSNVGEVVCIFL). Residues asparagine 768 and glutamate 771 each coordinate Ca(2+). Residues 778-787 (TAALGLPEAL) are Lumenal-facing. Residues 788–808 (IPVQLLWVNLVTDGLPATALG) form a helical membrane-spanning segment. The interaction with PLN stretch occupies residues 788–808 (IPVQLLWVNLVTDGLPATALG). The Ca(2+) site is built by asparagine 796, threonine 799, and aspartate 800. The Cytoplasmic segment spans residues 809–828 (FNPPDLDIMDKPPRSPKEPL). Residues 829–851 (ISGWLFFRYLAIGGYVGAATVGA) traverse the membrane as a helical segment. Residues 852–897 (AAWWFLYAEDGPSLTYHQLTHFMQCTHHNAEFEGVDCDIFESPVPM) lie on the Lumenal side of the membrane. A disulfide bridge connects residues cysteine 876 and cysteine 888. The helical transmembrane segment at 898-917 (TMALSVLVTIEMCNALNSLS) threads the bilayer. A Ca(2+)-binding site is contributed by glutamate 908. The Cytoplasmic portion of the chain corresponds to 918–930 (ENQSLLRMPPWVN). The helical transmembrane segment at 931–949 (IWLVGSICLSMSLHFVILY) threads the bilayer. The segment at 932–943 (WLVGSICLSMSL) is interaction with PLN. Topologically, residues 950–964 (VDPLPMIFKLTHLDL) are lumenal. The helical transmembrane segment at 965 to 985 (AHWLVVLRISFPVILLDEALK) threads the bilayer. The Cytoplasmic portion of the chain corresponds to 986–994 (FVARNYLEA).

This sequence belongs to the cation transport ATPase (P-type) (TC 3.A.3) family. Type IIA subfamily. As to quaternary structure, interacts with sarcolipin (SLN). Interacts with phospholamban (PLN). Interacts with myoregulin (MRLN). Interacts with DWORF. Mg(2+) serves as cofactor.

Its subcellular location is the endoplasmic reticulum membrane. The protein resides in the sarcoplasmic reticulum membrane. It catalyses the reaction Ca(2+)(in) + ATP + H2O = Ca(2+)(out) + ADP + phosphate + H(+). Inhibited by sarcolipin (SLN) and myoregulin (MRLN). Also shown to be inhibited by phospholamban (PLN) in vitro. Enhanced by DWORF; DWORF increases activity by displacing sarcolipin (SLN), phospholamban (PLN) and myoregulin (MRLN). Functionally, key regulator of striated muscle performance by acting as the major Ca(2+) ATPase responsible for the reuptake of cytosolic Ca(2+) into the sarcoplasmic reticulum. Catalyzes the hydrolysis of ATP coupled with the translocation of calcium from the cytosol to the sarcoplasmic reticulum lumen. Contributes to calcium sequestration involved in muscular excitation/contraction. The polypeptide is Sarcoplasmic/endoplasmic reticulum calcium ATPase 1 (ATP2A1) (Gallus gallus (Chicken)).